The chain runs to 464 residues: MDNLRKLNLLSVSLTIIFVSLTIATNLPFFEVKYPNNNPFGMLLRPTPIKNQSLGLPAHVGSDECRVWTKACSDEILRLTYQPDNVAWLKRVRRTIHENPELAFEEYETSRLIRSELDRMGIMYRYPLAKTGIRAWIGSGGPPFVAVRADMDALPIQEAVEWEHISKVAGKMHACGHDAHVTMLLGAAHILKAREHLLKGTVVLLFQPAEEAGNGAKNMIEDGALDDVEAIFAVHVSHIHPTGVIGSRSGPLLAGCGIFRAVITSEDSRGAANLLLAASSAVISLQGIVSREASPLDSQVVSVTSFDGGHSLDVAPDTVVLGGTFRAFSNSSFYYLKKRIQEVLMDQVGVFGCQATVNFFEKQNAIYPPTTNNDATYNHLKKVTIDLLGDSHFTLAPQMMGAEDFAFYSEIIPAAFYFIGIRNEELGSVHIAHSPHFMIDEDSLPVGAAVHAAVAERYLNDKHS.

The N-terminal stretch at 1 to 24 (MDNLRKLNLLSVSLTIIFVSLTIA) is a signal peptide. Mn(2+) contacts are provided by C175, H177, E211, H235, and H433.

Belongs to the peptidase M20 family.

The enzyme catalyses a jasmonyl-L-amino acid + H2O = a jasmonate + an L-alpha-amino acid. Hydrolyzes certain amino acid conjugates of the plant growth regulator indole-3-acetic acid (IAA). Also hydrolyzes amino acid conjugates of jasmonic acid and 12-hydroxy jasmonic acid. The polypeptide is IAA-amino acid hydrolase ILR1-like 6 (Arabidopsis thaliana (Mouse-ear cress)).